We begin with the raw amino-acid sequence, 172 residues long: Acetolactate synthase small subunit (172 aa).

One can recognise an ACT domain in the interval 4–79; that stretch reads IITLTVVNRS…DVLKVTDITN (76 aa).

The protein belongs to the acetolactate synthase small subunit family. In terms of assembly, dimer of large and small chains.

The enzyme catalyses 2 pyruvate + H(+) = (2S)-2-acetolactate + CO2. It functions in the pathway amino-acid biosynthesis; L-isoleucine biosynthesis; L-isoleucine from 2-oxobutanoate: step 1/4. Its pathway is amino-acid biosynthesis; L-valine biosynthesis; L-valine from pyruvate: step 1/4. In Bacillus subtilis (strain 168), this protein is Acetolactate synthase small subunit (ilvH).